The following is a 742-amino-acid chain: Probable LRR receptor-like serine/threonine-protein kinase At2g02780 (742 aa).

Residues 1-25 (MQISLQIHLSSFTFLLLIFLLPVLS) form the signal peptide. The Extracellular portion of the chain corresponds to 26 to 354 (ESQVASSESQ…KDSARIKLGL (329 aa)). LRR repeat units lie at residues 74–96 (HGHVTELTVTGNRTSKLSGSFHK), 104–128 (LSSLKTLSLTSLGISGSLSPKIITK), 130–154 (SPSLESLNLSSNFISGKIPEEIVSL), 156–177 (NLKSLVLRDNMFWGFVSDDLRG), 178–204 (LSNLQELDLGGNKLGPEVPSLPSKLTT), 206–223 (SLKNNSFRSKIPEQIKKL), 224–247 (NNLQSLDLSSNEFTGSIPEFLFSI), 249–271 (SLQILSLDQNLLSGSLPNSSCTS), and 273–294 (KIITLDVSHNLLTGKLPSCYSS). The N-linked (GlcNAc...) asparagine glycan is linked to N85. N137 is a glycosylation site (N-linked (GlcNAc...) asparagine). A glycan (N-linked (GlcNAc...) asparagine) is linked at N209. The N-linked (GlcNAc...) asparagine glycan is linked to N266. An N-linked (GlcNAc...) asparagine glycan is attached at N299. The helical transmembrane segment at 355–375 (VILIIIGVIILAAILVLLVLI) threads the bilayer. Over 376 to 742 (ALKRRRSRSE…HESSMKAIYE (367 aa)) the chain is Cytoplasmic. The interval 386–424 (DDPFEVNNSNNERHASDKVSVCSTTTASSKSLPDSRRVP) is disordered. The segment covering 406–417 (VCSTTTASSKSL) has biased composition (polar residues). The region spanning 426-720 (TMRSAVIGLP…DVVWNLQYTI (295 aa)) is the Protein kinase domain.

The protein belongs to the protein kinase superfamily. Ser/Thr protein kinase family.

The protein localises to the membrane. The enzyme catalyses L-seryl-[protein] + ATP = O-phospho-L-seryl-[protein] + ADP + H(+). It carries out the reaction L-threonyl-[protein] + ATP = O-phospho-L-threonyl-[protein] + ADP + H(+). The protein is Probable LRR receptor-like serine/threonine-protein kinase At2g02780 of Arabidopsis thaliana (Mouse-ear cress).